The chain runs to 218 residues: Hypoxanthine-guanine phosphoribosyltransferase (218 aa).

At alanine 2 the chain carries N-acetylalanine. Lysine 69 is a binding site for GMP. Lysine 103 carries the N6-acetyllysine modification. Residue lysine 115 forms a Glycyl lysine isopeptide (Lys-Gly) (interchain with G-Cter in SUMO1); alternate linkage. Residue lysine 115 forms a Glycyl lysine isopeptide (Lys-Gly) (interchain with G-Cter in SUMO2); alternate linkage. GMP contacts are provided by residues 134 to 142 (EDIIDTGKT), lysine 166, 186 to 188 (KFV), and aspartate 194. The active-site Proton acceptor is aspartate 138. Threonine 142 is subject to Phosphothreonine. Aspartate 194 contacts Mg(2+).

It belongs to the purine/pyrimidine phosphoribosyltransferase family. In terms of assembly, homotetramer. Mg(2+) is required as a cofactor.

The protein localises to the cytoplasm. It catalyses the reaction IMP + diphosphate = hypoxanthine + 5-phospho-alpha-D-ribose 1-diphosphate. The enzyme catalyses GMP + diphosphate = guanine + 5-phospho-alpha-D-ribose 1-diphosphate. It participates in purine metabolism; IMP biosynthesis via salvage pathway; IMP from hypoxanthine: step 1/1. Its function is as follows. Converts guanine to guanosine monophosphate, and hypoxanthine to inosine monophosphate. Transfers the 5-phosphoribosyl group from 5-phosphoribosylpyrophosphate onto the purine. Plays a central role in the generation of purine nucleotides through the purine salvage pathway. The protein is Hypoxanthine-guanine phosphoribosyltransferase (HPRT1) of Sus scrofa (Pig).